A 368-amino-acid polypeptide reads, in one-letter code: Zinc finger protein 24 (368 aa).

Residue Lys22 forms a Glycyl lysine isopeptide (Lys-Gly) (interchain with G-Cter in SUMO2) linkage. Lys27 is covalently cross-linked (Glycyl lysine isopeptide (Lys-Gly) (interchain with G-Cter in SUMO1); alternate). Lys27 participates in a covalent cross-link: Glycyl lysine isopeptide (Lys-Gly) (interchain with G-Cter in SUMO2); alternate. One can recognise an SCAN box domain in the interval 52-134 (RQRFRQFGYQ…TVLEDLESEL (83 aa)). Ser132 and Ser142 each carry phosphoserine. Glycyl lysine isopeptide (Lys-Gly) (interchain with G-Cter in SUMO2) cross-links involve residues Lys147, Lys177, and Lys236. The C2H2-type 1 zinc-finger motif lies at 251–273 (HICDECGKHFSQGSALILHQRIH). The tract at residues 251 to 301 (HICDECGKHFSQGSALILHQRIHSGEKPYGCVECGKAFSRSSILVQHQRVH) is necessary and sufficient for nuclear localization. Residue Ser274 is modified to Phosphoserine. Glycyl lysine isopeptide (Lys-Gly) (interchain with G-Cter in SUMO2) cross-links involve residues Lys277 and Lys286. 3 consecutive C2H2-type zinc fingers follow at residues 279–301 (YGCVECGKAFSRSSILVQHQRVH), 307–329 (YKCLECGKAFSQNSGLINHQRIH), and 335–357 (YECVQCGKSYSQSSNLFRHQRRH). Residue Ser292 is modified to Phosphoserine. Position 335 is a phosphotyrosine (Tyr335). Glycyl lysine isopeptide (Lys-Gly) (interchain with G-Cter in SUMO2) cross-links involve residues Lys361 and Lys367.

The protein belongs to the krueppel C2H2-type zinc-finger protein family. In terms of processing, sumoylated.

Its subcellular location is the nucleus. Functionally, transcription factor required for myelination of differentiated oligodendrocytes. Required for the conversion of oligodendrocytes from the premyelinating to the myelinating state. In the developing central nervous system (CNS), involved in the maintenance in the progenitor stage by promoting the cell cycle. Specifically binds to the 5'-TCAT-3' DNA sequence. Has transcription repressor activity in vitro. The protein is Zinc finger protein 24 (Znf24) of Rattus norvegicus (Rat).